Consider the following 360-residue polypeptide: Magnesium-protoporphyrin IX monomethyl ester [oxidative] cyclase (360 aa).

This sequence belongs to the AcsF family. Fe cation is required as a cofactor.

The enzyme catalyses Mg-protoporphyrin IX 13-monomethyl ester + 3 NADPH + 3 O2 + 2 H(+) = 3,8-divinyl protochlorophyllide a + 3 NADP(+) + 5 H2O. It functions in the pathway porphyrin-containing compound metabolism; chlorophyll biosynthesis (light-independent). In terms of biological role, catalyzes the formation of the isocyclic ring in chlorophyll biosynthesis. Mediates the cyclase reaction, which results in the formation of divinylprotochlorophyllide (Pchlide) characteristic of all chlorophylls from magnesium-protoporphyrin IX 13-monomethyl ester (MgPMME). In Synechococcus sp. (strain WH7803), this protein is Magnesium-protoporphyrin IX monomethyl ester [oxidative] cyclase.